Reading from the N-terminus, the 378-residue chain is Dihydroorotate dehydrogenase (quinone) (378 aa).

FMN is bound by residues 77–81 and Thr-101; that span reads AGFDK. Position 81 (Lys-81) interacts with substrate. Substrate is bound at residue 126-130; the sequence is NRMGF. 2 residues coordinate FMN: Asn-158 and Asn-191. Residue Asn-191 participates in substrate binding. Ser-194 (nucleophile) is an active-site residue. Asn-196 contacts substrate. Residues Lys-229 and Thr-257 each coordinate FMN. 258 to 259 provides a ligand contact to substrate; it reads NT. FMN-binding positions include Gly-287, Gly-316, and 337 to 338; that span reads YT.

It belongs to the dihydroorotate dehydrogenase family. Type 2 subfamily. As to quaternary structure, monomer. Requires FMN as cofactor.

It is found in the cell membrane. The enzyme catalyses (S)-dihydroorotate + a quinone = orotate + a quinol. It functions in the pathway pyrimidine metabolism; UMP biosynthesis via de novo pathway; orotate from (S)-dihydroorotate (quinone route): step 1/1. In terms of biological role, catalyzes the conversion of dihydroorotate to orotate with quinone as electron acceptor. The protein is Dihydroorotate dehydrogenase (quinone) of Synechococcus sp. (strain ATCC 27144 / PCC 6301 / SAUG 1402/1) (Anacystis nidulans).